Reading from the N-terminus, the 295-residue chain is MYISALLNVESTILDFWHLLKPRIMYLVVFTAIAGMVAAPGSIHPFLALISLMCIALGSGSAGAINMWYDRDIDLVMERTKNRPIPSGRVFAESALEFGITIGILSVFIMAIAVNYISAALLAVSILFYVFVYTIWLKRRTPQNIVIGGAAGAFPPMIGWAVVTDSVSWESFILFLIIFMWTPPHFWALSLNRSEDYVKASIPMFNVIHGPKKTRKHILIYSILLVLTSLLPALFLKKSLFYLSMAIIEGCVFIWFAISVIRLKNHSSQKKMFSYSISYLFSLFASIIFCSIDLF.

9 helical membrane passes run 27–47 (LVVFTAIAGMVAAPGSIHPFL), 48–68 (ALISLMCIALGSGSAGAINMW), 94–114 (SALEFGITIGILSVFIMAIAV), 117–137 (ISAALLAVSILFYVFVYTIWL), 144–164 (NIVIGGAAGAFPPMIGWAVVT), 171–191 (SFILFLIIFMWTPPHFWALSL), 216–236 (KHILIYSILLVLTSLLPALFL), 241–261 (FYLSMAIIEGCVFIWFAISVI), and 272–292 (MFSYSISYLFSLFASIIFCSI).

It belongs to the UbiA prenyltransferase family. Protoheme IX farnesyltransferase subfamily.

The protein localises to the cell membrane. The enzyme catalyses heme b + (2E,6E)-farnesyl diphosphate + H2O = Fe(II)-heme o + diphosphate. It functions in the pathway porphyrin-containing compound metabolism; heme O biosynthesis; heme O from protoheme: step 1/1. Its function is as follows. Converts heme B (protoheme IX) to heme O by substitution of the vinyl group on carbon 2 of heme B porphyrin ring with a hydroxyethyl farnesyl side group. In Wolbachia pipientis subsp. Culex pipiens (strain wPip), this protein is Protoheme IX farnesyltransferase.